Here is a 368-residue protein sequence, read N- to C-terminus: Probable leucine aminopeptidase ARB_03492 (368 aa).

The signal sequence occupies residues methionine 1–alanine 18. Asparagine 92 carries an N-linked (GlcNAc...) asparagine glycan. 2 residues coordinate Zn(2+): histidine 172 and aspartate 191. Residues asparagine 192 and asparagine 216 are each glycosylated (N-linked (GlcNAc...) asparagine). The Zn(2+) site is built by glutamate 230 and aspartate 257. An intrachain disulfide couples cysteine 301 to cysteine 305. Histidine 334 is a binding site for Zn(2+).

Belongs to the peptidase M28 family. M28E subfamily. As to quaternary structure, monomer. Requires Zn(2+) as cofactor.

Its subcellular location is the secreted. Functionally, probable extracellular aminopeptidase which contributes to pathogenicity. This Arthroderma benhamiae (strain ATCC MYA-4681 / CBS 112371) (Trichophyton mentagrophytes) protein is Probable leucine aminopeptidase ARB_03492.